The chain runs to 1068 residues: Rho family-interacting cell polarization regulator 2 (1068 aa).

Ser21 and Ser37 each carry phosphoserine; in isoform. A disordered region spans residues 45 to 73 (LKKPQAKLKKMHNLGHKNNNPPKEPQPKR). Residues 48 to 59 (PQAKLKKMHNLG) show a composition bias toward basic residues. Positions 55–113 (MHNLGHKNNNPPKEPQPKRVEEVYRALKNGLDEYLEVHQTELDKLTAQLKDMKRNSRLG) are involved in cell filopodia formation. The stretch at 83–112 (NGLDEYLEVHQTELDKLTAQLKDMKRNSRL) forms a coiled coil. Ser341 is subject to Phosphoserine; in isoform 2. The span at 474–491 (QNEGMDDTSSASSRNSLG) shows a compositional bias: polar residues. Positions 474–524 (QNEGMDDTSSASSRNSLGEGQEPKSHLKEEDPEEPRKPASAPSEACRRQSS) are disordered. Over residues 494-510 (QEPKSHLKEEDPEEPRK) the composition is skewed to basic and acidic residues. Ser523 is modified (phosphoserine; in isoform 2). Ser573 is modified (phosphoserine). Residue Ser585 is modified to Phosphoserine; in isoform 2. Positions 768–793 (VARSLLEKLSRQIQVMEKLAAVSDEN) form a coiled coil.

Belongs to the RIPOR family. Homooligomer; homooligomerization is regulated by RHOC and leads to the formation of concatemers through the association of N- and C-termini. Interacts with 14-3-3 proteins; these interactions occur during myogenic cell differentiation. Interacts with HDAC6; this interaction occurs during early myogenic differentiation and prevents HDAC6 to deacetylate tubulin. Interacts with DYSF; this interaction occurs during early myogenic differentiation. Interacts with MYOF. Interacts with RHOC. Isoform 1 and isoform 2 interact (via active GTP- or inactive GDP-bound forms) with RHOA; these interactions are direct, block the loading of GTP to RHOA and decrease upon chemokine CCL19 stimulation in primary T lymphocytes. Isoform 2 interacts (phosphorylated form) with HDAC6; this interaction induces T cell proliferation arrest. Isoform 2 interacts (phosphorylated form) with 14-3-3 proteins; these interactions induces T cell proliferation arrest. Isoform 2 interacts with 14-3-3 proteins. Isoform 2 interacts (via phosphorylated form) with YWHAB; this interaction occurs in a chemokine-dependent manner and does not compete for binding of RIPOR2 with RHOA nor blocks inhibition of RIPOR2-mediated RHOA activity. Isoform 2 interacts with YWHAE. Isoform 2 interacts with YWHAQ. In terms of processing, phosphorylated. Isoform 2 is phosphorylated in T cells. Chemokine-induced phosphorylation of isoform 2 in neutrophils occurs in a PKC- and AKT-dependent manner, resulting in RIPOR2 interaction with YWHAB and stabilization. Isoform 2 is phosphorylated by PKCA, AKT1 and MAPKAPK1A; in vitro. Post-translationally, acetylated during myogenic differentiation. Expressed in primary fetal mononuclear myoblast. Expressed strongly in naive T lymphocytes. Expressed weakly in activated T lymphocytes (at protein level). Expressed in blood cells and adult tissues of hematopoietic origin, such as the secondary lymphoid organs. Expressed in cytotrophoblast.

It is found in the cytoplasm. The protein resides in the cytoskeleton. It localises to the cell projection. The protein localises to the filopodium. Its subcellular location is the stereocilium. It is found in the stereocilium membrane. The protein resides in the apical cell membrane. In terms of biological role, acts as an inhibitor of the small GTPase RHOA and plays several roles in the regulation of myoblast and hair cell differentiation, lymphocyte T proliferation and neutrophil polarization. Inhibits chemokine-induced T lymphocyte responses, such as cell adhesion, polarization and migration. Involved also in the regulation of neutrophil polarization, chemotaxis and adhesion. Required for normal development of inner and outer hair cell stereocilia within the cochlea of the inner ear. Plays a role for maintaining the structural organization of the basal domain of stereocilia. Involved in mechanosensory hair cell function. Required for normal hearing. Acts as an inhibitor of the small GTPase RHOA. Plays a role in fetal mononuclear myoblast differentiation by promoting filopodia and myotube formation. Maintains naive T lymphocytes in a quiescent state. This Homo sapiens (Human) protein is Rho family-interacting cell polarization regulator 2 (RIPOR2).